The chain runs to 149 residues: Large ribosomal subunit protein bL9 (149 aa).

This sequence belongs to the bacterial ribosomal protein bL9 family.

Its function is as follows. Binds to the 23S rRNA. The protein is Large ribosomal subunit protein bL9 of Xanthomonas oryzae pv. oryzae (strain MAFF 311018).